Consider the following 220-residue polypeptide: Phosphoribosylformylglycinamidine synthase subunit PurQ (220 aa).

Residues 2–220 enclose the Glutamine amidotransferase type-1 domain; the sequence is RVGVVVFPGS…LRSVLAGAKV (219 aa). The active-site Nucleophile is Cys85. Active-site residues include His193 and Glu195.

Part of the FGAM synthase complex composed of 1 PurL, 1 PurQ and 2 PurS subunits.

The protein localises to the cytoplasm. The catalysed reaction is N(2)-formyl-N(1)-(5-phospho-beta-D-ribosyl)glycinamide + L-glutamine + ATP + H2O = 2-formamido-N(1)-(5-O-phospho-beta-D-ribosyl)acetamidine + L-glutamate + ADP + phosphate + H(+). It catalyses the reaction L-glutamine + H2O = L-glutamate + NH4(+). It participates in purine metabolism; IMP biosynthesis via de novo pathway; 5-amino-1-(5-phospho-D-ribosyl)imidazole from N(2)-formyl-N(1)-(5-phospho-D-ribosyl)glycinamide: step 1/2. Functionally, part of the phosphoribosylformylglycinamidine synthase complex involved in the purines biosynthetic pathway. Catalyzes the ATP-dependent conversion of formylglycinamide ribonucleotide (FGAR) and glutamine to yield formylglycinamidine ribonucleotide (FGAM) and glutamate. The FGAM synthase complex is composed of three subunits. PurQ produces an ammonia molecule by converting glutamine to glutamate. PurL transfers the ammonia molecule to FGAR to form FGAM in an ATP-dependent manner. PurS interacts with PurQ and PurL and is thought to assist in the transfer of the ammonia molecule from PurQ to PurL. The chain is Phosphoribosylformylglycinamidine synthase subunit PurQ from Rubrobacter xylanophilus (strain DSM 9941 / JCM 11954 / NBRC 16129 / PRD-1).